The following is a 348-amino-acid chain: GPALPP motifs-containing protein 1 (348 aa).

Disordered stretches follow at residues 1-163 (MARD…AKGP) and 177-317 (QRMK…DLKV). Ala2 is modified (N-acetylalanine). The GPALPP motif 1 motif lies at 7–12 (GPALPP). A compositionally biased stretch (basic and acidic residues) spans 14-27 (FKERATVEDQERDP). The residue at position 28 (Ser28) is a Phosphoserine. The GPALPP motif 2 motif lies at 32–37 (GPALPP). Positions 41–59 (SSSSDSSDSNEDSSSLSEE) are enriched in low complexity. Residues 60–69 (GNQESEEDDA) show a composition bias toward acidic residues. Residues 93-98 (GPALPP) carry the GPALPP motif 3 motif. Phosphoserine is present on Ser106. The span at 108 to 117 (PRPIIGPALP) shows a compositional bias: pro residues. The GPALPP motif 4 motif lies at 113–118 (GPALPP). Phosphoserine occurs at positions 138, 143, and 148. Residues 144 to 154 (EEAESGEDEDI) show a composition bias toward acidic residues. Basic and acidic residues-rich tracts occupy residues 177-195 (QRMK…KPVT), 235-269 (PADR…KRLA), 277-287 (ESKRSESLMDI), and 295-317 (KAAE…DLKV). Residues Lys279 and Lys316 each participate in a glycyl lysine isopeptide (Lys-Gly) (interchain with G-Cter in SUMO2) cross-link.

The chain is GPALPP motifs-containing protein 1 (Gpalpp1) from Rattus norvegicus (Rat).